Consider the following 425-residue polypeptide: Serine--tRNA ligase (425 aa).

233–235 (TAE) is a binding site for L-serine. An ATP-binding site is contributed by 264–266 (RRE). An L-serine-binding site is contributed by glutamate 287. 351–354 (EISS) contacts ATP. Serine 385 contacts L-serine.

This sequence belongs to the class-II aminoacyl-tRNA synthetase family. Type-1 seryl-tRNA synthetase subfamily. In terms of assembly, homodimer. The tRNA molecule binds across the dimer.

It is found in the cytoplasm. It catalyses the reaction tRNA(Ser) + L-serine + ATP = L-seryl-tRNA(Ser) + AMP + diphosphate + H(+). The enzyme catalyses tRNA(Sec) + L-serine + ATP = L-seryl-tRNA(Sec) + AMP + diphosphate + H(+). The protein operates within aminoacyl-tRNA biosynthesis; selenocysteinyl-tRNA(Sec) biosynthesis; L-seryl-tRNA(Sec) from L-serine and tRNA(Sec): step 1/1. Functionally, catalyzes the attachment of serine to tRNA(Ser). Is also able to aminoacylate tRNA(Sec) with serine, to form the misacylated tRNA L-seryl-tRNA(Sec), which will be further converted into selenocysteinyl-tRNA(Sec). The polypeptide is Serine--tRNA ligase (Synechococcus sp. (strain WH7803)).